The chain runs to 876 residues: GRB2-associated and regulator of MAPK protein (876 aa).

Residues 9 to 318 (KDVKWSSASF…NLIKGEVWQD (310 aa)) are CABIT. Residue tyrosine 451 is modified to Phosphotyrosine. Disordered regions lie at residues 460-569 (SVKR…TLSY) and 708-741 (DRML…LSEP). Polar residues predominate over residues 461-471 (VKRSGQPLTRS). The span at 532-549 (PPVPPRSSKPSSPTPSVP) shows a compositional bias: pro residues. Residues 556-569 (VRQQTRSPSPTLSY) show a composition bias toward polar residues. The SAM domain occupies 811–876 (LSVEEVSKSL…QFINGWRPKM (66 aa)).

This sequence belongs to the GAREM family.

Adapter protein that may provide a link between cell surface epidermal growth factor receptor and the MAPK/ERK signaling pathway. May promote cell proliferation. In Xenopus laevis (African clawed frog), this protein is GRB2-associated and regulator of MAPK protein (garem1).